A 307-amino-acid chain; its full sequence is MSSPHGGLDDQIERLMQCKPLPEPEVRALCEKAKEILMEESNVQPVKSPVTICGDIHGQFHDLAELFRIGGKCPDTNYLFMGDYVDRGYYSVETVTLLVALKVRYPQRITILRGNHESRQITQVYGFYDECLRKYGNANVWKTFTDLFDYFPLTALVESEIFCLHGGLSPSIETLDNIRNFDRVQEVPHEGPMCDLLWSDPDDRCGWGISPRGAGYTFGQDISEQFNHTNNLRLIARAHQLVMEGFNWAHEQKVVTIFSAPNYCYRCGNMASILEVDDCREHTFIQFEPAPRRGEPDVTRRTPDYFL.

The Mn(2+) site is built by aspartate 55, histidine 57, aspartate 83, and asparagine 115. Histidine 116 functions as the Proton donor in the catalytic mechanism. Histidine 165 and histidine 239 together coordinate Mn(2+).

This sequence belongs to the PPP phosphatase family. PP-2A subfamily. The cofactor is Mn(2+).

It is found in the cytoplasm. It catalyses the reaction O-phospho-L-seryl-[protein] + H2O = L-seryl-[protein] + phosphate. It carries out the reaction O-phospho-L-threonyl-[protein] + H2O = L-threonyl-[protein] + phosphate. The polypeptide is Serine/threonine-protein phosphatase PP2A-2 catalytic subunit (PP2A2) (Oryza sativa subsp. indica (Rice)).